Reading from the N-terminus, the 232-residue chain is Large ribosomal subunit protein uL1 (232 aa).

Belongs to the universal ribosomal protein uL1 family. Part of the 50S ribosomal subunit.

Binds directly to 23S rRNA. The L1 stalk is quite mobile in the ribosome, and is involved in E site tRNA release. In terms of biological role, protein L1 is also a translational repressor protein, it controls the translation of the L11 operon by binding to its mRNA. This is Large ribosomal subunit protein uL1 from Levilactobacillus brevis (strain ATCC 367 / BCRC 12310 / CIP 105137 / JCM 1170 / LMG 11437 / NCIMB 947 / NCTC 947) (Lactobacillus brevis).